A 395-amino-acid chain; its full sequence is F-box/kelch-repeat protein At3g13680 (395 aa).

Residues 1 to 47 (MTTMGDLPGDLVEEILSRVPLTSLRAIRSTCQKWNSLSKSQICGRKA) enclose the F-box domain. Kelch repeat units lie at residues 154 to 202 (ILRI…SLKG), 210 to 256 (KKET…VSLA), 265 to 314 (VLYQ…FIDE), and 337 to 383 (IVYI…LVQL).

The sequence is that of F-box/kelch-repeat protein At3g13680 from Arabidopsis thaliana (Mouse-ear cress).